We begin with the raw amino-acid sequence, 201 residues long: Lymphotoxin-alpha (201 aa).

Residues 1–27 form the signal peptide; sequence MTSSGVLCLLGALSLQVLLLQPPGAQG. The interval 23–52 is disordered; it reads PGAQGAPNPDNSHSSSPAPPQTAQHLSQKS. Residues 31–51 show a composition bias toward polar residues; it reads PDNSHSSSPAPPQTAQHLSQK. In terms of domain architecture, THD spans 60–201; sequence PAAHLVGDPS…SSVFFGAFAL (142 aa). An N-linked (GlcNAc...) asparagine glycan is attached at Asn-93. Cys-117 and Cys-152 form a disulfide bridge.

Belongs to the tumor necrosis factor family. As to quaternary structure, homotrimer, and heterotrimer of either two LTB and one LTA subunits or (less prevalent) two LTA and one LTB subunits. Interacts with TNFRSF14.

It localises to the secreted. It is found in the membrane. Cytokine that in its homotrimeric form binds to TNFRSF1A/TNFR1, TNFRSF1B/TNFBR and TNFRSF14/HVEM. In its heterotrimeric form with LTB binds to TNFRSF3/LTBR. Lymphotoxin is produced by lymphocytes and is cytotoxic for a wide range of tumor cells in vitro and in vivo. This chain is Lymphotoxin-alpha (LTA), found in Notamacropus eugenii (Tammar wallaby).